A 691-amino-acid polypeptide reads, in one-letter code: Ribonucleoprotein PTB-binding 2 (691 aa).

Gly residues predominate over residues 1–30; that stretch reads MAAAAGDGGGEGGAGLGSAAGLGPGPGLRG. The interval 1-47 is disordered; the sequence is MAAAAGDGGGEGGAGLGSAAGLGPGPGLRGQGPSAEAHEGAPDPMPA. Residue Ala2 is modified to N-acetylalanine. 3 consecutive RRM domains span residues 69 to 140, 142 to 220, and 231 to 309; these read RKIL…LQPT, ALLC…WMDV, and KCLC…FCAP. Disordered stretches follow at residues 492 to 522 and 543 to 574; these read PNQH…EGNF and GHHK…GEPP. Residues 548 to 569 are compositionally biased toward polar residues; sequence QQSQPKGTEISSGAASKNQTSL.

Interacts with PTBP1 and RAVER1.

The protein resides in the nucleus. It localises to the cytoplasm. Its function is as follows. May bind single-stranded nucleic acids. The chain is Ribonucleoprotein PTB-binding 2 (RAVER2) from Homo sapiens (Human).